Consider the following 319-residue polypeptide: Carbonic anhydrase, chloroplastic (319 aa).

A chloroplast-targeting transit peptide spans 1-98 (MSTINGCLTS…AASKVAQITS (98 aa)).

It belongs to the beta-class carbonic anhydrase family. As to quaternary structure, homohexamer.

Its subcellular location is the plastid. The protein resides in the chloroplast stroma. It carries out the reaction hydrogencarbonate + H(+) = CO2 + H2O. Its function is as follows. Reversible hydration of carbon dioxide. The protein is Carbonic anhydrase, chloroplastic of Spinacia oleracea (Spinach).